Consider the following 230-residue polypeptide: UPF0173 metal-dependent hydrolase OEOE_1287 (230 aa).

This sequence belongs to the UPF0173 family.

The sequence is that of UPF0173 metal-dependent hydrolase OEOE_1287 from Oenococcus oeni (strain ATCC BAA-331 / PSU-1).